Here is an 871-residue protein sequence, read N- to C-terminus: Translation initiation factor IF-2 (871 aa).

Disordered regions lie at residues 60-101 (KKNI…QEVK) and 184-203 (ESLK…KKES). Residues 61–72 (KNIKTPTAKKPK) show a composition bias toward basic residues. Over residues 73-101 (KENIKEQEKLNESEKKEPKKEEKLKQEVK) the composition is skewed to basic and acidic residues. The region spanning 370 to 537 (TRAPVITIMG…IVLLQADILE (168 aa)) is the tr-type G domain. Residues 379–386 (GHVDHGKT) are G1. 379-386 (GHVDHGKT) is a GTP binding site. The interval 404-408 (GITQH) is G2. A G3 region spans residues 425 to 428 (DTPG). Residues 425 to 429 (DTPGH) and 479 to 482 (NKMD) contribute to the GTP site. The tract at residues 479–482 (NKMD) is G4. Positions 515–517 (SAK) are G5.

The protein belongs to the TRAFAC class translation factor GTPase superfamily. Classic translation factor GTPase family. IF-2 subfamily.

It localises to the cytoplasm. Functionally, one of the essential components for the initiation of protein synthesis. Protects formylmethionyl-tRNA from spontaneous hydrolysis and promotes its binding to the 30S ribosomal subunits. Also involved in the hydrolysis of GTP during the formation of the 70S ribosomal complex. The protein is Translation initiation factor IF-2 of Campylobacter jejuni (strain RM1221).